The following is a 121-amino-acid chain: Small ribosomal subunit protein eS24 (121 aa).

This sequence belongs to the eukaryotic ribosomal protein eS24 family.

The chain is Small ribosomal subunit protein eS24 from Pyrobaculum arsenaticum (strain DSM 13514 / JCM 11321 / PZ6).